A 225-amino-acid polypeptide reads, in one-letter code: Ribonuclease 3 (225 aa).

In terms of domain architecture, RNase III spans 5–127; that stretch reads IEKLTRQLGY…IIGAVYLDSD (123 aa). A Mg(2+)-binding site is contributed by E40. Residue D44 is part of the active site. D113 and E116 together coordinate Mg(2+). E116 is a catalytic residue. Residues 154-224 enclose the DRBM domain; the sequence is DPKTRLQEFL…AELALEQLTN (71 aa).

The protein belongs to the ribonuclease III family. As to quaternary structure, homodimer. Mg(2+) serves as cofactor.

Its subcellular location is the cytoplasm. The catalysed reaction is Endonucleolytic cleavage to 5'-phosphomonoester.. Its function is as follows. Digests double-stranded RNA. Involved in the processing of primary rRNA transcript to yield the immediate precursors to the large and small rRNAs (23S and 16S). Processes some mRNAs, and tRNAs when they are encoded in the rRNA operon. Processes pre-crRNA and tracrRNA of type II CRISPR loci if present in the organism. In Vibrio vulnificus (strain YJ016), this protein is Ribonuclease 3.